We begin with the raw amino-acid sequence, 583 residues long: Long-chain-fatty-acid--AMP ligase FadD26 (583 aa).

It belongs to the ATP-dependent AMP-binding enzyme family.

The enzyme catalyses holo-[(phenol)carboxyphthiodiolenone synthase] + a long-chain fatty acid + ATP = a long-chain fatty acyl-[(phenol)carboxyphthiodiolenone synthase] + AMP + diphosphate. The catalysed reaction is eicosanoate + holo-[(phenol)carboxyphthiodiolenone synthase] + ATP = icosanoyl-[(phenol)carboxyphthiodiolenone synthase] + AMP + diphosphate. It catalyses the reaction holo-[(phenol)carboxyphthiodiolenone synthase] + docosanoate + ATP = docosanoyl-[(phenol)carboxyphthiodiolenone synthase] + AMP + diphosphate. It functions in the pathway lipid metabolism; fatty acid biosynthesis. Functionally, catalyzes the activation of long-chain fatty acids as acyl-adenylates (acyl-AMP), which are then transferred to the multifunctional polyketide synthase PpsA for further chain extension. Catalyzes the adenylation of the long-chain fatty acids eicosanoate (C20) or docosanoate (C22), and potentially the very-long-chain fatty acid lignocerate (C24). Involved in the biosynthesis of phthiocerol dimycocerosate (DIM A) and phthiodiolone dimycocerosate (DIM B). In Mycobacterium tuberculosis (strain CDC 1551 / Oshkosh), this protein is Long-chain-fatty-acid--AMP ligase FadD26 (fadD26).